A 236-amino-acid chain; its full sequence is Phosphoribosylaminoimidazole-succinocarboxamide synthase (236 aa).

This sequence belongs to the SAICAR synthetase family.

It carries out the reaction 5-amino-1-(5-phospho-D-ribosyl)imidazole-4-carboxylate + L-aspartate + ATP = (2S)-2-[5-amino-1-(5-phospho-beta-D-ribosyl)imidazole-4-carboxamido]succinate + ADP + phosphate + 2 H(+). Its pathway is purine metabolism; IMP biosynthesis via de novo pathway; 5-amino-1-(5-phospho-D-ribosyl)imidazole-4-carboxamide from 5-amino-1-(5-phospho-D-ribosyl)imidazole-4-carboxylate: step 1/2. This chain is Phosphoribosylaminoimidazole-succinocarboxamide synthase, found in Coprothermobacter proteolyticus (strain ATCC 35245 / DSM 5265 / OCM 4 / BT).